A 338-amino-acid chain; its full sequence is 5-dehydro-2-deoxygluconokinase (338 aa).

It belongs to the carbohydrate kinase PfkB family.

It carries out the reaction 5-dehydro-2-deoxy-D-gluconate + ATP = 6-phospho-5-dehydro-2-deoxy-D-gluconate + ADP + H(+). Its pathway is polyol metabolism; myo-inositol degradation into acetyl-CoA; acetyl-CoA from myo-inositol: step 5/7. In terms of biological role, catalyzes the phosphorylation of 5-dehydro-2-deoxy-D-gluconate (2-deoxy-5-keto-D-gluconate or DKG) to 6-phospho-5-dehydro-2-deoxy-D-gluconate (DKGP). The sequence is that of 5-dehydro-2-deoxygluconokinase from Clostridium perfringens (strain ATCC 13124 / DSM 756 / JCM 1290 / NCIMB 6125 / NCTC 8237 / Type A).